A 325-amino-acid chain; its full sequence is Intelectin-2 (325 aa).

An N-terminal signal peptide occupies residues 1–26 (MLSMLRTMTRLCFLLFFSVATSGCSA). The Fibrinogen C-terminal domain occupies 44-267 (FSFSSLPRSC…AANALCAGIK (224 aa)). Cysteine 53 and cysteine 82 form a disulfide bridge. Ca(2+) is bound by residues histidine 98, glutamate 99, aspartate 101, glycine 104, glycine 109, aspartate 110, and aspartate 145. 3 disulfides stabilise this stretch: cysteine 106–cysteine 292, cysteine 211–cysteine 271, and cysteine 263–cysteine 277. Residues asparagine 272, glutamate 274, and aspartate 294 each contribute to the Ca(2+) site. Position 274 to 275 (274 to 275 (EH)) interacts with a carbohydrate.

As to expression, expressed only in the small intestine.

The protein resides in the secreted. May play a role in the defense system against pathogens. In Homo sapiens (Human), this protein is Intelectin-2 (ITLN2).